The following is a 141-amino-acid chain: VLSPADKTNVKGTWSKIGNHSAEYGAEALERMFINFPSTKTYFSHFDLGHGSAQIKGHGKKVADALTKAVGHIDNLPDALSELSDLHAHKLRVDPVNFKLLSHCLLVTLALHLPADFTPSVHASLDKFLASVSTVLTSKYR.

The 141-residue stretch at 1-141 (VLSPADKTNV…VSTVLTSKYR (141 aa)) folds into the Globin domain. The residue at position 3 (S3) is a Phosphoserine. Position 7 is an N6-succinyllysine (K7). Position 8 is a phosphothreonine (T8). K11 is subject to N6-succinyllysine. Residue K16 is modified to N6-acetyllysine; alternate. An N6-succinyllysine; alternate modification is found at K16. Residue Y24 is modified to Phosphotyrosine. An N6-succinyllysine modification is found at K40. An O2-binding site is contributed by H58. H87 is a binding site for heme b. At S102 the chain carries Phosphoserine. T108 bears the Phosphothreonine mark. S124 and S131 each carry phosphoserine. Residues T134 and T137 each carry the phosphothreonine modification. Residue S138 is modified to Phosphoserine.

It belongs to the globin family. Heterotetramer of two alpha chains and two beta chains. Red blood cells.

Its function is as follows. Involved in oxygen transport from the lung to the various peripheral tissues. Functionally, hemopressin acts as an antagonist peptide of the cannabinoid receptor CNR1. Hemopressin-binding efficiently blocks cannabinoid receptor CNR1 and subsequent signaling. The polypeptide is Hemoglobin subunit alpha (HBA) (Tursiops truncatus (Atlantic bottle-nosed dolphin)).